We begin with the raw amino-acid sequence, 337 residues long: MQSIPIKNVGESRLVDPFQRQYYYLRLSITDQCNFRCTYCLPDGYQPEANKPSFLTLKEITHLAQAFAEMGTEKIRLTGGEPTLRKDFISIAESITNIDGIRQLAVTTNGYRMAKDVADWKQAGITSINVSVDSLDPKMFHQITGINKFDDVMRGIDRAFEVGYNKVKVNSVLMKNLNDKEFEQFLAWVKDRPIQMRFIELMQTGEMDSFFDKFHLSGQVLADKLLKNGWTLQHKSHTDGPAKVFTHSDYTGEIGLIMPYEKNFCASCNRLRVSAKGKLHLCLFGEEGIELRDLLQSHEQQGILQARIFAALQGKREHHYLHIGDTGVRNHLASIGG.

A Radical SAM core domain is found at 17–243 (PFQRQYYYLR…HKSHTDGPAK (227 aa)). Residue Arg-26 participates in GTP binding. Residues Cys-33 and Cys-37 each contribute to the [4Fe-4S] cluster site. Tyr-39 provides a ligand contact to S-adenosyl-L-methionine. Position 40 (Cys-40) interacts with [4Fe-4S] cluster. Residue Arg-76 participates in GTP binding. Gly-80 contributes to the S-adenosyl-L-methionine binding site. Residue Thr-107 coordinates GTP. Residue Ser-131 coordinates S-adenosyl-L-methionine. A GTP-binding site is contributed by Lys-168. Residue Met-202 participates in S-adenosyl-L-methionine binding. Cys-265 and Cys-268 together coordinate [4Fe-4S] cluster. Position 270-272 (270-272 (RLR)) interacts with GTP. Cys-282 is a [4Fe-4S] cluster binding site.

The protein belongs to the radical SAM superfamily. MoaA family. As to quaternary structure, monomer and homodimer. [4Fe-4S] cluster serves as cofactor.

The enzyme catalyses GTP + AH2 + S-adenosyl-L-methionine = (8S)-3',8-cyclo-7,8-dihydroguanosine 5'-triphosphate + 5'-deoxyadenosine + L-methionine + A + H(+). It functions in the pathway cofactor biosynthesis; molybdopterin biosynthesis. Functionally, catalyzes the cyclization of GTP to (8S)-3',8-cyclo-7,8-dihydroguanosine 5'-triphosphate. The sequence is that of GTP 3',8-cyclase from Haemophilus influenzae (strain PittGG).